The sequence spans 44 residues: YADAIFTNSYRKVLGQLSARKLLQDIMNRQQGERNQEQGAKVRL.

Leucine 44 bears the Leucine amide mark.

It belongs to the glucagon family.

The protein resides in the secreted. Functionally, GRF is released by the hypothalamus and acts on the adenohypophyse to stimulate the secretion of growth hormone. This Capra hircus (Goat) protein is Somatoliberin (GHRH).